We begin with the raw amino-acid sequence, 80 residues long: Exodeoxyribonuclease 7 small subunit (80 aa).

Belongs to the XseB family. As to quaternary structure, heterooligomer composed of large and small subunits.

It localises to the cytoplasm. The catalysed reaction is Exonucleolytic cleavage in either 5'- to 3'- or 3'- to 5'-direction to yield nucleoside 5'-phosphates.. Bidirectionally degrades single-stranded DNA into large acid-insoluble oligonucleotides, which are then degraded further into small acid-soluble oligonucleotides. This is Exodeoxyribonuclease 7 small subunit from Aliivibrio fischeri (strain ATCC 700601 / ES114) (Vibrio fischeri).